The primary structure comprises 122 residues: Large ribosomal subunit protein uL14 (122 aa).

The protein belongs to the universal ribosomal protein uL14 family. Part of the 50S ribosomal subunit. Forms a cluster with proteins L3 and L19. In the 70S ribosome, L14 and L19 interact and together make contacts with the 16S rRNA in bridges B5 and B8.

Functionally, binds to 23S rRNA. Forms part of two intersubunit bridges in the 70S ribosome. This chain is Large ribosomal subunit protein uL14, found in Lachnospira eligens (strain ATCC 27750 / DSM 3376 / VPI C15-48 / C15-B4) (Eubacterium eligens).